The sequence spans 162 residues: Cytochrome c-type biogenesis protein CcmE (162 aa).

Residues 1 to 13 (MSFWPQSRKARRR) are Cytoplasmic-facing. A helical; Signal-anchor for type II membrane protein membrane pass occupies residues 14–34 (LTILLAIAPVLALAVGLALYG). Residues 35 to 162 (LRDSISLFYT…DAPAYGSQKP (128 aa)) are Periplasmic-facing. 2 residues coordinate heme: H128 and Y132. The span at 140-151 (ALKEQGEWRGEG) shows a compositional bias: basic and acidic residues. A disordered region spans residues 140-162 (ALKEQGEWRGEGADAPAYGSQKP).

Belongs to the CcmE/CycJ family.

Its subcellular location is the cell inner membrane. Heme chaperone required for the biogenesis of c-type cytochromes. Transiently binds heme delivered by CcmC and transfers the heme to apo-cytochromes in a process facilitated by CcmF and CcmH. The chain is Cytochrome c-type biogenesis protein CcmE from Caulobacter vibrioides (strain ATCC 19089 / CIP 103742 / CB 15) (Caulobacter crescentus).